The chain runs to 402 residues: Queuine tRNA-ribosyltransferase-like protein (402 aa).

The protein belongs to the queuine tRNA-ribosyltransferase family.

The sequence is that of Queuine tRNA-ribosyltransferase-like protein from Theileria parva (East coast fever infection agent).